Here is a 555-residue protein sequence, read N- to C-terminus: MPKEPETEYDPSLGRKFIFVTGGVMSGLGKGITAASTGRLLSNAGFDVTAVKIDPYLNVDAGTMNPYQHGEVYVLKDGGEVDLDLGNYERFLGEDMTSDHNVTTGKTYKHVIEKERSGDYLGKTVQIIPHITDDIKRRIREAAAGTDVCIVEVGGTVGDIEGMPYLEALRQFAHEEASENILFTHVTLVPYSKNGEQKTKPTQHSVKELRSIGLQPDILVGRCSDRLEPATKEKIALFCDVPTTAVFSNPDVDDIYHVPLVIEEEGLDQHVMERLNVAEEAITTTDRTNTWRELVTRERTSSVDVALVGKYDLEDAYMSVHEALKHAGIETQTEVTVQWVDSDEMLDHHEDRLREADGVVVPGGFGSRGIAGKLKAIEYCREHNVPFLGLCLGFQMAVVEHAQNVLGFADAHSAELQPETPHPVIDILPEQYDVETMGGTMRLGAHETNIDPNTLAAAVYNGTVCTERHRHRYEVNPEYIDKLEAGALSFSGQANNRMEILERSDHPFFLGTQFHPEFRSRPDRASPPFVSFLKSVDSTLDARSLNVSTSEEVQI.

Residues 1-277 form an amidoligase domain region; it reads MPKEPETEYD…DQHVMERLNV (277 aa). Residue S26 participates in CTP binding. UTP is bound at residue S26. 27 to 32 is a binding site for ATP; the sequence is GLGKGI. Y67 serves as a coordination point for L-glutamine. D84 contacts ATP. Residues D84 and E152 each coordinate Mg(2+). CTP-binding positions include 159 to 161, 198 to 203, and K234; these read DIE and KTKPTQ. UTP-binding positions include 198 to 203 and K234; that span reads KTKPTQ. Positions 307–542 constitute a Glutamine amidotransferase type-1 domain; sequence LVGKYDLEDA…LKSVDSTLDA (236 aa). G364 is a binding site for L-glutamine. The active-site Nucleophile; for glutamine hydrolysis is C391. L-glutamine contacts are provided by residues 392-395, E415, and R472; that span reads LGFQ. Active-site residues include H515 and E517.

Belongs to the CTP synthase family. As to quaternary structure, homotetramer.

It catalyses the reaction UTP + L-glutamine + ATP + H2O = CTP + L-glutamate + ADP + phosphate + 2 H(+). The enzyme catalyses L-glutamine + H2O = L-glutamate + NH4(+). The catalysed reaction is UTP + NH4(+) + ATP = CTP + ADP + phosphate + 2 H(+). It participates in pyrimidine metabolism; CTP biosynthesis via de novo pathway; CTP from UDP: step 2/2. With respect to regulation, allosterically activated by GTP, when glutamine is the substrate; GTP has no effect on the reaction when ammonia is the substrate. The allosteric effector GTP functions by stabilizing the protein conformation that binds the tetrahedral intermediate(s) formed during glutamine hydrolysis. Inhibited by the product CTP, via allosteric rather than competitive inhibition. Functionally, catalyzes the ATP-dependent amination of UTP to CTP with either L-glutamine or ammonia as the source of nitrogen. Regulates intracellular CTP levels through interactions with the four ribonucleotide triphosphates. This is CTP synthase from Haloquadratum walsbyi (strain DSM 16790 / HBSQ001).